Here is a 694-residue protein sequence, read N- to C-terminus: Polyribonucleotide nucleotidyltransferase (694 aa).

2 residues coordinate Mg(2+): D485 and D491. The KH domain maps to 552–611; that stretch reads PRIETMQIKPNKIATVIGPGGKQIRQIIEEAGVQIDINDSGLVSISASSPQAIEKAKSMI. An S1 motif domain is found at 621 to 689; that stretch reads GKIYEGRVTS…EKGQYKLSHK (69 aa).

The protein belongs to the polyribonucleotide nucleotidyltransferase family. Requires Mg(2+) as cofactor.

The protein localises to the cytoplasm. It carries out the reaction RNA(n+1) + phosphate = RNA(n) + a ribonucleoside 5'-diphosphate. In terms of biological role, involved in mRNA degradation. Catalyzes the phosphorolysis of single-stranded polyribonucleotides processively in the 3'- to 5'-direction. This is Polyribonucleotide nucleotidyltransferase from Chlamydia caviae (strain ATCC VR-813 / DSM 19441 / 03DC25 / GPIC) (Chlamydophila caviae).